A 403-amino-acid polypeptide reads, in one-letter code: S-adenosylmethionine synthase (403 aa).

Residue histidine 16 participates in ATP binding. Aspartate 18 is a binding site for Mg(2+). K(+) is bound at residue glutamate 44. L-methionine contacts are provided by glutamate 57 and glutamine 110. Positions 110-120 (QSAHIAQGVDA) are flexible loop. Residues 175–177 (DSK), aspartate 253, 259–260 (RK), alanine 276, and lysine 280 each bind ATP. Aspartate 253 contributes to the L-methionine binding site. Lysine 284 is an L-methionine binding site.

The protein belongs to the AdoMet synthase family. In terms of assembly, homotetramer; dimer of dimers. Mg(2+) is required as a cofactor. K(+) serves as cofactor.

It is found in the cytoplasm. The enzyme catalyses L-methionine + ATP + H2O = S-adenosyl-L-methionine + phosphate + diphosphate. It participates in amino-acid biosynthesis; S-adenosyl-L-methionine biosynthesis; S-adenosyl-L-methionine from L-methionine: step 1/1. Functionally, catalyzes the formation of S-adenosylmethionine (AdoMet) from methionine and ATP. The overall synthetic reaction is composed of two sequential steps, AdoMet formation and the subsequent tripolyphosphate hydrolysis which occurs prior to release of AdoMet from the enzyme. The protein is S-adenosylmethionine synthase of Erythrobacter litoralis (strain HTCC2594).